The chain runs to 293 residues: 2-pyrone-4,6-dicarboxylate hydrolase (293 aa).

A disordered region spans residues 1-20; it reads MTNDERILSWNETPSKPRYT. Residues 29-31, Tyr47, Ser75, Arg122, Arg128, Tyr154, and His178 contribute to the substrate site; that span reads HCH. Residue Asp246 is the Proton acceptor of the active site. Substrate is bound at residue Asn251.

The protein belongs to the metallo-dependent hydrolases superfamily. PDC hydrolase family. As to quaternary structure, monomer.

The catalysed reaction is 2-oxo-2H-pyran-4,6-dicarboxylate + H2O = (1E)-4-oxobut-1-ene-1,2,4-tricarboxylate + H(+). It functions in the pathway secondary metabolite metabolism; lignin degradation. Strongly inhibited by 1 mM Zn(2+) ions. Also inhibited by pyridine-2,4-dicarboxylic acid, 5-hydroxyisophthalic acid and 5,5'-dithiobis(2-nitrobenzoic acid) (Ellman reagent). Contributes to the degradation of lignin at the level of the protocatechuate 4,5-cleavage pathway. Catalyzes the hydrolysis of 2-pyrone-4,6-dicarboxylate (PDC) to (4E)-oxalomesaconate (OMA). The keto form of OMA can tautomerize into the enol form, 4-carboxy-2-hydroxymuconate (CHM), under certain pH conditions. Also catalyzes the reverse reaction. Is essential for the growth of Sphingobium sp. SYK-6 on vanillate but is not responsible for the growth of this strain on syringate. In Sphingobium sp. (strain NBRC 103272 / SYK-6), this protein is 2-pyrone-4,6-dicarboxylate hydrolase.